We begin with the raw amino-acid sequence, 656 residues long: tRNA 5-methylaminomethyl-2-thiouridine biosynthesis bifunctional protein MnmC (656 aa).

A tRNA (mnm(5)s(2)U34)-methyltransferase region spans residues 1 to 236; it reads MTDPLIPAVL…KRAMLVGRFA (236 aa). Positions 260–656 are FAD-dependent cmnm(5)s(2)U34 oxidoreductase; the sequence is IGTGLAGCAV…LRALRQGTVS (397 aa).

This sequence in the N-terminal section; belongs to the methyltransferase superfamily. tRNA (mnm(5)s(2)U34)-methyltransferase family. In the C-terminal section; belongs to the DAO family. FAD serves as cofactor.

It localises to the cytoplasm. It catalyses the reaction 5-aminomethyl-2-thiouridine(34) in tRNA + S-adenosyl-L-methionine = 5-methylaminomethyl-2-thiouridine(34) in tRNA + S-adenosyl-L-homocysteine + H(+). Catalyzes the last two steps in the biosynthesis of 5-methylaminomethyl-2-thiouridine (mnm(5)s(2)U) at the wobble position (U34) in tRNA. Catalyzes the FAD-dependent demodification of cmnm(5)s(2)U34 to nm(5)s(2)U34, followed by the transfer of a methyl group from S-adenosyl-L-methionine to nm(5)s(2)U34, to form mnm(5)s(2)U34. The sequence is that of tRNA 5-methylaminomethyl-2-thiouridine biosynthesis bifunctional protein MnmC from Paraburkholderia xenovorans (strain LB400).